The primary structure comprises 23 residues: Paralytic peptide 2 (23 aa).

Cysteine 7 and cysteine 19 are oxidised to a cystine.

It belongs to the GBP/PSP1/paralytic peptide family. In terms of tissue distribution, hemolymph.

Its function is as follows. Causes rapid, rigid paralysis when injected into Lepidopteran larvae. The physiological role may be to reduce hemolymph loss following injury and promote wound healing. The polypeptide is Paralytic peptide 2 (Spodoptera exigua (Beet armyworm)).